Reading from the N-terminus, the 92-residue chain is MKILLAIALMLSTVMWVSTQQPQGVHTYCGRHLARTLADLCWEAGVDKRSGAQFASYGSAWLMPYSEGRGKRGIVDECCLRPCSVDVLLSYC.

The signal sequence occupies residues 1–19 (MKILLAIALMLSTVMWVST). Glutamine 20 bears the Pyrrolidone carboxylic acid mark. 3 disulfide bridges follow: cysteine 29–cysteine 79, cysteine 41–cysteine 92, and cysteine 78–cysteine 83. The propeptide at 50–70 (SGAQFASYGSAWLMPYSEGRG) is c peptide like.

Belongs to the insulin family. Heterodimer of a B chain and an A chain linked by two disulfide bonds.

It localises to the secreted. Functionally, brain peptide responsible for activation of prothoracic glands to produce ecdysone in insects. The chain is Bombyxin A-4 (BBXA4) from Bombyx mori (Silk moth).